Reading from the N-terminus, the 459-residue chain is C-type lectin domain family 14 member A (459 aa).

The signal sequence occupies residues 1 to 21 (MRPALALCLLCPAFWPRPGNG). The Extracellular portion of the chain corresponds to 22–386 (EHPTADRAAC…VSLTFDTSST (365 aa)). Residues 33 to 173 (ASGACYSLHH…LRTDGYLCKY (141 aa)) enclose the C-type lectin domain. An intrachain disulfide couples cysteine 143 to cysteine 162. Asparagine 189 carries an N-linked (GlcNAc...) asparagine glycan. An EGF-like domain is found at 246-288 (PCSGRYLLAGKCVELPDCLDHLGDFTCECAVGFELGKDGRSCE). Residues asparagine 306, asparagine 317, and asparagine 370 are each glycosylated (N-linked (GlcNAc...) asparagine). Residues 387 to 407 (VVFILVSIAVIVLVVLTITVL) form a helical membrane-spanning segment. At 408–459 (GLFKLCFHKSRSSRTGKGALDSPGVECDAEATSLHHSSTQCTDIGVKSGTVA) the chain is on the cytoplasmic side. Serine 440 carries the phosphoserine modification.

Its subcellular location is the membrane. The chain is C-type lectin domain family 14 member A (Clec14a) from Mus musculus (Mouse).